Consider the following 405-residue polypeptide: Methylamine dehydrogenase heavy chain (405 aa).

Residues 1-36 (MTTFDHPSMIRQPKPTGLAGGLVLAALMLSSSLALA) form the signal peptide.

Belongs to the aromatic amine dehydrogenase heavy chain family. Tetramer of two light and two heavy chains.

The protein localises to the periplasm. The catalysed reaction is 2 oxidized [amicyanin] + methylamine + H2O = 2 reduced [amicyanin] + formaldehyde + NH4(+) + 2 H(+). Its function is as follows. Methylamine dehydrogenase carries out the oxidation of methylamine. Electrons are passed from methylamine dehydrogenase to amicyanin. This is Methylamine dehydrogenase heavy chain (mauB) from Methylophilus methylotrophus (Bacterium W3A1).